The chain runs to 205 residues: Probable molybdenum cofactor guanylyltransferase (205 aa).

GTP-binding positions include 9-11 (LAG), Lys21, Asp66, and Asp95. Asp95 serves as a coordination point for Mg(2+).

The protein belongs to the MobA family. Mg(2+) serves as cofactor.

The protein resides in the cytoplasm. The enzyme catalyses Mo-molybdopterin + GTP + H(+) = Mo-molybdopterin guanine dinucleotide + diphosphate. Its function is as follows. Transfers a GMP moiety from GTP to Mo-molybdopterin (Mo-MPT) cofactor (Moco or molybdenum cofactor) to form Mo-molybdopterin guanine dinucleotide (Mo-MGD) cofactor. This Pelotomaculum thermopropionicum (strain DSM 13744 / JCM 10971 / SI) protein is Probable molybdenum cofactor guanylyltransferase.